Here is a 259-residue protein sequence, read N- to C-terminus: Transmembrane protein 81 (259 aa).

The N-terminal stretch at 1-18 is a signal peptide; the sequence is MALSTLWLVLMLWTSLFS. The Extracellular segment spans residues 19-221; it reads DSQCSTLSQA…KVYSSSTIRN (203 aa). In terms of domain architecture, Ig-like spans 97-172; it reads GRRLVLDCLE…VLDTGKRRVK (76 aa). A disulfide bond links cysteine 104 and cysteine 161. A helical transmembrane segment spans residues 222–242; that stretch reads IVIISVPLSFAIAVVIFIFLF. Over 243–259 the chain is Cytoplasmic; the sequence is CYSRRARRAAHLCQDNI.

Forms a complex with izumo1 and spaca6 on spermatocyte cell membrane. The complex binds to oocyte protein bncr. As to expression, expressed in sperm.

It localises to the cell membrane. Functionally, essential fertilization factor required for male fertility. Part of a conserved trimeric sperm complex with the essential fertilization factors IZUMO1 and SPACA6 which bridges sperm and oocyte membranes during fertilization by binding to IZUMO1R/JUNO on the oocyte. The sequence is that of Transmembrane protein 81 from Danio rerio (Zebrafish).